The primary structure comprises 123 residues: MSTRTKALNAYRHGLRATRIAFRNDAEVLLAARAKMRSGMLCPPDPKLTTEDQIQHLEDVAVFLRRNLVQGKKVDGSSTKEPRYHLNIHKDTELGDNETIADPTARVKTNLKARPFKCSDKKQ.

The N-terminal 24 residues, 1–24 (MSTRTKALNAYRHGLRATRIAFRN), are a transit peptide targeting the mitochondrion.

The protein belongs to the complex I LYR family. MZM1 subfamily. As to quaternary structure, interacts with RIP1.

Its subcellular location is the mitochondrion matrix. In terms of biological role, assembly factor required for Rieske Fe-S protein RIP1 incorporation into the cytochrome b-c1 (CIII) complex. Functions as a chaperone, binding to this subunit within the mitochondrial matrix and stabilizing it prior to its translocation and insertion into the late CIII dimeric intermediate within the mitochondrial inner membrane. Modulates the mitochondrial matrix zinc pool. This chain is Mitochondrial zinc maintenance protein 1, mitochondrial (MZM1), found in Saccharomyces cerevisiae (strain RM11-1a) (Baker's yeast).